Reading from the N-terminus, the 230-residue chain is MTTVDFHFDPLCPFAYQTSVWIRDVRAQLGITINWRFFSLEEINLVAGKKHPWERDWSYGWSLMRIGALLRRTNMSLLDRWYAAIGHELHTLGGKPHDPAVARRLLCDVGVNAAILDAALDDPTTHDDVRADHQRVVAAGGYGVPTLFLDGQCLFGPVLVDPPAGPAALNLWSVVTGMAGLPHVYELQRPKSPADVELIAQQLRPYLDGRDWVSINRGEIVDIDRLAGRS.

This is an uncharacterized protein from Mycobacterium tuberculosis (strain ATCC 25618 / H37Rv).